The sequence spans 133 residues: Small ribosomal subunit protein uS9 (133 aa).

This sequence belongs to the universal ribosomal protein uS9 family.

The chain is Small ribosomal subunit protein uS9 from Ureaplasma urealyticum serovar 10 (strain ATCC 33699 / Western).